A 113-amino-acid chain; its full sequence is Putative pterin-4-alpha-carbinolamine dehydratase (113 aa).

It belongs to the pterin-4-alpha-carbinolamine dehydratase family.

It catalyses the reaction (4aS,6R)-4a-hydroxy-L-erythro-5,6,7,8-tetrahydrobiopterin = (6R)-L-erythro-6,7-dihydrobiopterin + H2O. The chain is Putative pterin-4-alpha-carbinolamine dehydratase from Chlorobium limicola (strain DSM 245 / NBRC 103803 / 6330).